A 249-amino-acid chain; its full sequence is Small ribosomal subunit protein uS3 (249 aa).

The KH type-2 domain maps to 39–109; that stretch reads IRTYVLARLK…EVKIDVVEVV (71 aa). A compositionally biased stretch (basic and acidic residues) spans 226 to 239; the sequence is KERRNDAGARNRDS. The interval 226–249 is disordered; it reads KERRNDAGARNRDSRTKRRHRTKR. Positions 240–249 are enriched in basic residues; the sequence is RTKRRHRTKR.

This sequence belongs to the universal ribosomal protein uS3 family. Part of the 30S ribosomal subunit. Forms a tight complex with proteins S10 and S14.

Its function is as follows. Binds the lower part of the 30S subunit head. Binds mRNA in the 70S ribosome, positioning it for translation. The chain is Small ribosomal subunit protein uS3 from Pelodictyon phaeoclathratiforme (strain DSM 5477 / BU-1).